A 192-amino-acid polypeptide reads, in one-letter code: ATP-dependent Clp protease proteolytic subunit 1 (192 aa).

S92 acts as the Nucleophile in catalysis. The active site involves H117.

It belongs to the peptidase S14 family. Fourteen ClpP subunits assemble into 2 heptameric rings which stack back to back to give a disk-like structure with a central cavity, resembling the structure of eukaryotic proteasomes.

It is found in the cytoplasm. The enzyme catalyses Hydrolysis of proteins to small peptides in the presence of ATP and magnesium. alpha-casein is the usual test substrate. In the absence of ATP, only oligopeptides shorter than five residues are hydrolyzed (such as succinyl-Leu-Tyr-|-NHMec, and Leu-Tyr-Leu-|-Tyr-Trp, in which cleavage of the -Tyr-|-Leu- and -Tyr-|-Trp bonds also occurs).. Functionally, cleaves peptides in various proteins in a process that requires ATP hydrolysis. Has a chymotrypsin-like activity. Plays a major role in the degradation of misfolded proteins. This Chlamydia muridarum (strain MoPn / Nigg) protein is ATP-dependent Clp protease proteolytic subunit 1.